A 409-amino-acid chain; its full sequence is NADH-quinone oxidoreductase subunit D (409 aa).

The protein belongs to the complex I 49 kDa subunit family. In terms of assembly, NDH-1 is composed of 14 different subunits. Subunits NuoB, C, D, E, F, and G constitute the peripheral sector of the complex.

The protein localises to the cell inner membrane. The enzyme catalyses a quinone + NADH + 5 H(+)(in) = a quinol + NAD(+) + 4 H(+)(out). Functionally, NDH-1 shuttles electrons from NADH, via FMN and iron-sulfur (Fe-S) centers, to quinones in the respiratory chain. The immediate electron acceptor for the enzyme in this species is believed to be ubiquinone. Couples the redox reaction to proton translocation (for every two electrons transferred, four hydrogen ions are translocated across the cytoplasmic membrane), and thus conserves the redox energy in a proton gradient. The polypeptide is NADH-quinone oxidoreductase subunit D (Sulfurovum sp. (strain NBC37-1)).